A 454-amino-acid polypeptide reads, in one-letter code: DNA repair protein RadA (454 aa).

Residues 11–28 form a C4-type zinc finger; the sequence is CTECGTHSPKWLGQCSGC. 94 to 101 contributes to the ATP binding site; it reads GEPGIGKS. The RadA KNRFG motif signature appears at 251–255; it reads KNRFG. The tract at residues 350–454 is lon-protease-like; it reads DVFLSIAGGL…TIKDAVRLLQ (105 aa).

It belongs to the RecA family. RadA subfamily.

In terms of biological role, DNA-dependent ATPase involved in processing of recombination intermediates, plays a role in repairing DNA breaks. Stimulates the branch migration of RecA-mediated strand transfer reactions, allowing the 3' invading strand to extend heteroduplex DNA faster. Binds ssDNA in the presence of ADP but not other nucleotides, has ATPase activity that is stimulated by ssDNA and various branched DNA structures, but inhibited by SSB. Does not have RecA's homology-searching function. The protein is DNA repair protein RadA of Chlamydia trachomatis serovar D (strain ATCC VR-885 / DSM 19411 / UW-3/Cx).